The chain runs to 181 residues: Mating-type M-specific polypeptide Mc (181 aa).

Positions 103–171 (TPRPPNAFIL…QHQKMYPGYK (69 aa)) form a DNA-binding region, HMG box.

The protein localises to the nucleus. Mating type proteins are sequence specific DNA-binding proteins that act as master switches in yeast differentiation by controlling gene expression in a cell type-specific fashion. Positive regulator of MFM genes. The HMG box recognizes the DNA sequence 5'-AACAAAG-3'. Required for conjugation and efficient meiosis. In Schizosaccharomyces kambucha (Fission yeast), this protein is Mating-type M-specific polypeptide Mc (matMc).